A 368-amino-acid polypeptide reads, in one-letter code: Mitogen-activated protein kinase HOG1B (368 aa).

In terms of domain architecture, Protein kinase spans 20 to 299; sequence YVNLEPVGMG…ASQALAHPYL (280 aa). Residues 26-34 and K49 contribute to the ATP site; that span reads VGMGAFGLV. D141 (proton acceptor) is an active-site residue. T171 carries the post-translational modification Phosphothreonine. A TXY motif is present at residues 171-173; sequence TGY. Y173 carries the phosphotyrosine modification.

It belongs to the protein kinase superfamily. Ser/Thr protein kinase family. MAP kinase subfamily. HOG1 sub-subfamily. Mg(2+) is required as a cofactor. Phosphorylated. Dually phosphorylated on Thr-171 and Tyr-173, which activates the enzyme. Rapidly dephosphorylated upon either hypo- or hyperosmotic shock.

The protein resides in the cytoplasm. It is found in the nucleus. It catalyses the reaction L-seryl-[protein] + ATP = O-phospho-L-seryl-[protein] + ADP + H(+). The enzyme catalyses L-threonyl-[protein] + ATP = O-phospho-L-threonyl-[protein] + ADP + H(+). With respect to regulation, activated by tyrosine and threonine phosphorylation. In terms of biological role, mitogen-activated protein kinase involved in a signal transduction pathway that is activated by changes in the osmolarity of the extracellular environment. Controls osmotic regulation of transcription of target genes. The polypeptide is Mitogen-activated protein kinase HOG1B (HOG1B) (Wallemia ichthyophaga (strain EXF-994 / CBS 113033)).